Here is a 764-residue protein sequence, read N- to C-terminus: Myotubularin-related protein 10-B (764 aa).

A Myotubularin phosphatase domain is found at 208–649 (FESYSDWDRE…THIQIWKLCY (442 aa)).

It belongs to the protein-tyrosine phosphatase family. Non-receptor class myotubularin subfamily.

In Xenopus laevis (African clawed frog), this protein is Myotubularin-related protein 10-B (mtmr10-b).